A 723-amino-acid chain; its full sequence is Threonine--tRNA ligase 1, cytoplasmic (723 aa).

Positions 1–46 (MFEEKASSPSGKMGGEEKPIGAGEEKQKEGGKKKNKEGSGDGGRAE) are disordered. Residues 14–39 (GGEEKPIGAGEEKQKEGGKKKNKEGS) are compositionally biased toward basic and acidic residues. Residue Ser39 is modified to Phosphoserine. A TGS domain is found at 79 to 143 (DSKPIKVTLP…EEDCTLELLK (65 aa)). Lys243 carries the post-translational modification N6-acetyllysine. Thr246 is subject to Phosphothreonine. Residue Tyr298 is modified to Phosphotyrosine. Phosphothreonine is present on Thr453. Position 702 is a phosphoserine (Ser702).

The protein belongs to the class-II aminoacyl-tRNA synthetase family. In terms of assembly, homodimer. Post-translationally, ISGylated.

The protein localises to the cytoplasm. The enzyme catalyses tRNA(Thr) + L-threonine + ATP = L-threonyl-tRNA(Thr) + AMP + diphosphate + H(+). Inhibited by borrelidin (BN, IC 50 is 7 nM), which binds to 4 distinct subsites in the protein, preventing binding of all 3 substrates. Its function is as follows. Catalyzes the attachment of threonine to tRNA(Thr) in a two-step reaction: threonine is first activated by ATP to form Thr-AMP and then transferred to the acceptor end of tRNA(Thr). Also edits incorrectly charged tRNA(Thr) via its editing domain, at the post-transfer stage. The protein is Threonine--tRNA ligase 1, cytoplasmic of Homo sapiens (Human).